Consider the following 361-residue polypeptide: Mannose-1-phosphate guanylyltransferase 1 (361 aa).

Residues L6 and V7 each coordinate GDP-alpha-D-mannose. Positions 9, 11, 12, 13, and 23 each coordinate diphosphate. G85, N109, D111, G146, and N173 together coordinate GDP-alpha-D-mannose.

This sequence belongs to the transferase hexapeptide repeat family. As to quaternary structure, interacts in vitro with CSN5A and CSN5B, but in planta only with CSN5B, which targets CYT1 for degradation in the dark by the 26S proteasome. Forms homodimers in the unliganded structure. The product-bound structure is composed of six dimers that form a dodecameric assembly.

It localises to the cytoplasm. It is found in the nucleus. The enzyme catalyses alpha-D-mannose 1-phosphate + GTP + H(+) = GDP-alpha-D-mannose + diphosphate. It functions in the pathway nucleotide-sugar biosynthesis; GDP-alpha-D-mannose biosynthesis; GDP-alpha-D-mannose from alpha-D-mannose 1-phosphate (GTP route): step 1/1. Functionally, essential protein during embryogenesis. Catalyzes a reaction of the Smirnoff-Wheeler pathway, the major route to ascorbate biosynthesis in plants. Plays an essential role in plant growth and development and cell-wall architecture. Provides GDP-mannose, used for cell wall carbohydrate biosynthesis, protein N-glycosylation, as well as for the biosynthesis of the antioxidant ascorbate. This is Mannose-1-phosphate guanylyltransferase 1 from Arabidopsis thaliana (Mouse-ear cress).